The primary structure comprises 502 residues: Protein O-glucosyltransferase 2 (502 aa).

An N-terminal signal peptide occupies residues 1–19; it reads MFGTLLLYCFFLATVPALA. The Filamin repeat unit spans residues 24-130; sequence ERQLSPEKSE…VAKSPYILKG (107 aa). Asn-302 and Asn-414 each carry an N-linked (GlcNAc...) asparagine glycan. Residues 499 to 502 carry the Prevents secretion from ER motif; it reads KDEL.

This sequence belongs to the KDELC family. N-glycosylated.

Its subcellular location is the endoplasmic reticulum lumen. The enzyme catalyses L-seryl-[EGF-like domain protein] + UDP-alpha-D-glucose = 3-O-(beta-D-glucosyl)-L-seryl-[EGF-like domain protein] + UDP + H(+). It catalyses the reaction L-seryl-[EGF-like domain protein] + UDP-alpha-D-xylose = 3-O-(beta-D-xylosyl)-L-seryl-[EGF-like domain protein] + UDP + H(+). It participates in protein modification; protein glycosylation. Its function is as follows. Protein glucosyltransferase that catalyzes the transfer of glucose from UDP-glucose to a serine residue within the consensus sequence peptide C-X-N-T-X-G-S-F-X-C. Can also catalyze the transfer of xylose from UDP-xylose but less efficiently. Specifically targets extracellular EGF repeats of proteins such as NOTCH1, NOTCH3, FBN1, FBN2 and LTBP1. May regulate the transport of NOTCH1 and NOTCH3 to the plasma membrane and thereby the Notch signaling pathway. This chain is Protein O-glucosyltransferase 2, found in Homo sapiens (Human).